The chain runs to 409 residues: ORC1-type DNA replication protein 1 (409 aa).

Residues 63–67 (TGKTA), tyrosine 206, and arginine 218 contribute to the ATP site.

Belongs to the CDC6/cdc18 family.

Functionally, involved in regulation of DNA replication. In Archaeoglobus fulgidus (strain ATCC 49558 / DSM 4304 / JCM 9628 / NBRC 100126 / VC-16), this protein is ORC1-type DNA replication protein 1 (cdc6-1).